Consider the following 58-residue polypeptide: Metallothionein (58 aa).

The beta stretch occupies residues proline 1 to serine 29. A divalent metal cation contacts are provided by cysteine 4, cysteine 5, cysteine 10, cysteine 12, cysteine 17, cysteine 21, cysteine 23, cysteine 26, cysteine 28, cysteine 31, cysteine 34, cysteine 38, cysteine 40, cysteine 46, cysteine 50, cysteine 54, cysteine 56, and cysteine 57. An alpha region spans residues proline 30 to proline 58.

Metallothioneins have a high content of cysteine residues that bind various heavy metals. Class I MTS in crustacea are involved in the sequestration of elevated levels of heavy-metal ions. This is Metallothionein from Potamon potamios.